We begin with the raw amino-acid sequence, 201 residues long: ATP-dependent Clp protease proteolytic subunit (201 aa).

Ser-98 (nucleophile) is an active-site residue. His-123 is a catalytic residue.

This sequence belongs to the peptidase S14 family. As to quaternary structure, fourteen ClpP subunits assemble into 2 heptameric rings which stack back to back to give a disk-like structure with a central cavity, resembling the structure of eukaryotic proteasomes.

Its subcellular location is the cytoplasm. It carries out the reaction Hydrolysis of proteins to small peptides in the presence of ATP and magnesium. alpha-casein is the usual test substrate. In the absence of ATP, only oligopeptides shorter than five residues are hydrolyzed (such as succinyl-Leu-Tyr-|-NHMec, and Leu-Tyr-Leu-|-Tyr-Trp, in which cleavage of the -Tyr-|-Leu- and -Tyr-|-Trp bonds also occurs).. In terms of biological role, cleaves peptides in various proteins in a process that requires ATP hydrolysis. Has a chymotrypsin-like activity. Plays a major role in the degradation of misfolded proteins. The polypeptide is ATP-dependent Clp protease proteolytic subunit (Rickettsia felis (strain ATCC VR-1525 / URRWXCal2) (Rickettsia azadi)).